The sequence spans 350 residues: 4-hydroxy-3-methylbut-2-en-1-yl diphosphate synthase (flavodoxin) (350 aa).

[4Fe-4S] cluster contacts are provided by Cys-263, Cys-266, Cys-298, and Glu-305.

This sequence belongs to the IspG family. [4Fe-4S] cluster serves as cofactor.

The enzyme catalyses (2E)-4-hydroxy-3-methylbut-2-enyl diphosphate + oxidized [flavodoxin] + H2O + 2 H(+) = 2-C-methyl-D-erythritol 2,4-cyclic diphosphate + reduced [flavodoxin]. It functions in the pathway isoprenoid biosynthesis; isopentenyl diphosphate biosynthesis via DXP pathway; isopentenyl diphosphate from 1-deoxy-D-xylulose 5-phosphate: step 5/6. In terms of biological role, converts 2C-methyl-D-erythritol 2,4-cyclodiphosphate (ME-2,4cPP) into 1-hydroxy-2-methyl-2-(E)-butenyl 4-diphosphate. This chain is 4-hydroxy-3-methylbut-2-en-1-yl diphosphate synthase (flavodoxin), found in Nautilia profundicola (strain ATCC BAA-1463 / DSM 18972 / AmH).